Reading from the N-terminus, the 310-residue chain is Deoxypodophyllotoxin synthase (310 aa).

Residues 159–258 (STNYLLHFMR…RLSTSSFSFP (100 aa)) enclose the Fe2OG dioxygenase domain. Fe cation-binding residues include His-184, Asp-186, and His-239. Arg-249 is a binding site for 2-oxoglutarate.

It belongs to the iron/ascorbate-dependent oxidoreductase family. Requires Fe(2+) as cofactor. In terms of tissue distribution, mostly expressed in leaves and stems.

The catalysed reaction is (-)-yatein + 2-oxoglutarate + O2 = (-)-deoxypodophyllotoxin + succinate + CO2 + H2O. It participates in aromatic compound metabolism; phenylpropanoid biosynthesis. Its function is as follows. 2-oxoglutarate-dependent dioxygenase involved in the biosynthesis of etoposide, a chemotherapeutic compound of the topoisomerase inhibitor family. Catalyzes the conversion of yatein to deoxypodophyllotoxin. Can also use, to some extent, demethylyatein as substrate. This is Deoxypodophyllotoxin synthase from Sinopodophyllum hexandrum (Himalayan may apple).